A 591-amino-acid chain; its full sequence is Aspartate--tRNA(Asp/Asn) ligase (591 aa).

Glu-170 serves as a coordination point for L-aspartate. The segment at 194 to 197 (QLFK) is aspartate. Arg-216 is a binding site for L-aspartate. Residues 216–218 (RDE) and Gln-225 each bind ATP. His-448 provides a ligand contact to L-aspartate. Glu-482 is a binding site for ATP. L-aspartate is bound at residue Arg-489. 534-537 (GWDR) provides a ligand contact to ATP. The interval 559–591 (GGVDPLTDAPAPITEQQRKESGIDVKPEPSKPH) is disordered. Positions 574 to 591 (QQRKESGIDVKPEPSKPH) are enriched in basic and acidic residues.

Belongs to the class-II aminoacyl-tRNA synthetase family. Type 1 subfamily. In terms of assembly, homodimer.

The protein resides in the cytoplasm. It carries out the reaction tRNA(Asx) + L-aspartate + ATP = L-aspartyl-tRNA(Asx) + AMP + diphosphate. Its function is as follows. Aspartyl-tRNA synthetase with relaxed tRNA specificity since it is able to aspartylate not only its cognate tRNA(Asp) but also tRNA(Asn). Reaction proceeds in two steps: L-aspartate is first activated by ATP to form Asp-AMP and then transferred to the acceptor end of tRNA(Asp/Asn). This chain is Aspartate--tRNA(Asp/Asn) ligase, found in Mycolicibacterium paratuberculosis (strain ATCC BAA-968 / K-10) (Mycobacterium paratuberculosis).